A 359-amino-acid polypeptide reads, in one-letter code: Histidinol-phosphate aminotransferase 1 (359 aa).

At Lys216 the chain carries N6-(pyridoxal phosphate)lysine.

Belongs to the class-II pyridoxal-phosphate-dependent aminotransferase family. Histidinol-phosphate aminotransferase subfamily. Homodimer. Requires pyridoxal 5'-phosphate as cofactor.

The enzyme catalyses L-histidinol phosphate + 2-oxoglutarate = 3-(imidazol-4-yl)-2-oxopropyl phosphate + L-glutamate. The protein operates within amino-acid biosynthesis; L-histidine biosynthesis; L-histidine from 5-phospho-alpha-D-ribose 1-diphosphate: step 7/9. This is Histidinol-phosphate aminotransferase 1 (hisC1) from Caulobacter vibrioides (strain ATCC 19089 / CIP 103742 / CB 15) (Caulobacter crescentus).